We begin with the raw amino-acid sequence, 641 residues long: Chaperone protein DnaK (641 aa).

T199 carries the post-translational modification Phosphothreonine; by autocatalysis. The interval 603–627 (YGQQQAEGGAQAAGAAGGSSKADDA) is disordered. A compositionally biased stretch (low complexity) spans 604 to 616 (GQQQAEGGAQAAG).

This sequence belongs to the heat shock protein 70 family.

In terms of biological role, acts as a chaperone. This Azoarcus sp. (strain BH72) protein is Chaperone protein DnaK.